The sequence spans 326 residues: MSSLNKSIGSVTESPINVVVHNYDNNDPTETRHEVQTKHGKLVCFQKIGSNQSPNMPTIISYHDLGLNHTTCFSPFFNHPNMNHILPYLNIIHIEAPGHEFNAETIPSSQYPSITEMAEDIQYVLDYFKVKVFIGLGAGAGGCILTQYSIFYPRSVVGLVLVGSVIKSFSWLDWVKSWVELTTLPSLKNPTGVRKYLIDHYYADNLEETNPDLLEIIKKEMVLINPDNLYHYVHSFVKRDDIKEEQIKALGCKILLVVGKDSTYKEDIIDLFSQFNPRNSTILQVPDCGILVTAEKPGDIVEPFKLFMQGIGFLLDYYQSHDDAQK.

This sequence belongs to the NDRG family.

The protein is NDRG-like protein of Dictyostelium discoideum (Social amoeba).